The sequence spans 559 residues: uncharacterized protein (559 aa).

The span at 1–10 (MSGRRGDHPG) shows a compositional bias: basic and acidic residues. The interval 1-76 (MSGRRGDHPG…ERSRVPPRTT (76 aa)) is disordered. 11 helical membrane passes run 128-148 (FAVD…AAAS), 155-175 (VALY…LIGP), 186-206 (VALA…IMNY), 208-228 (GATG…MMVF), 259-279 (VFGL…VEFV), 283-303 (LFQL…GASL), 358-378 (LWGN…PAFV), 387-407 (WVQL…NFAG), 428-448 (VLVT…ATAI), 490-510 (LAWV…WVGF), and 515-535 (ALLI…SLIP).

This sequence to M.leprae ML2143.

It is found in the cell membrane. This is an uncharacterized protein from Mycobacterium tuberculosis (strain CDC 1551 / Oshkosh).